A 412-amino-acid chain; its full sequence is BURP domain-containing protein 13 (412 aa).

The first 23 residues, M1–A23, serve as a signal peptide directing secretion. Residues F190 to N406 enclose the BURP domain. N369 is a glycosylation site (N-linked (GlcNAc...) asparagine).

As to expression, specifically expressed in anthers, in the tapetum and microspores (at protein level).

Required for pollen development. Probably synthesized in the tapetum, packaged in Ubisch bodies and transported at appropriate stages to the micropsores. The polypeptide is BURP domain-containing protein 13 (BURP13) (Oryza sativa subsp. japonica (Rice)).